A 356-amino-acid chain; its full sequence is Trans-enoyl reductase pgmF (356 aa).

NADP(+) contacts are provided by residues 57–60 (VDFK), 175–178 (SGGC), 198–201 (STPN), Y216, 261–262 (VG), and 342–343 (AK).

The protein belongs to the zinc-containing alcohol dehydrogenase family.

Functionally, FAD-linked oxidoreductase; part of the gene cluster that mediates the biosynthesis of pleosporalin A, ascomycone A, as well as a third cryptic naphthoquinone derived pigment, all responsible for the coloration of conidia. The pathway begins with the biosynthesis of the cyclized heptaketide 3-acetonyl-1,6,8-trihydroxy-2-naphthaldehyde by the NR-PKS pgmA. The C-6 hydroxyl group is further methylated by the O-methyltransferase pgmB to yield fusarubinaldehyde which is in turn oxidized by the cytochrome P450 monooxygenase pgmC at C-9. The C-1 hydroxyl group is then methylated spontaneously. Although pgmE, pgmD and pgmH are essential for the production of pleosporalin A, it is not the case for the 2 other final products and it remains difficult to assign a specific function to each enzyme. PgmF and pgmG seem not to be involved in pigment biosynthesis although they were regulated by the cluster-specific transcription factor pgmR. The chain is Trans-enoyl reductase pgmF from Aspergillus terreus.